The following is a 456-amino-acid chain: tRNA modification GTPase MnmE (456 aa).

3 residues coordinate (6S)-5-formyl-5,6,7,8-tetrahydrofolate: R24, E81, and K120. The TrmE-type G domain maps to 216-379 (GMTVVIAGRP…LREHLKACMG (164 aa)). Residue N226 participates in K(+) binding. GTP-binding positions include 226–231 (NAGKSS), 245–251 (TEIAGTT), 270–273 (DTAG), 335–338 (NKAD), and 359–361 (SAR). Residue S230 participates in Mg(2+) binding. Residues T245, I247, and T250 each coordinate K(+). A Mg(2+)-binding site is contributed by T251. K456 provides a ligand contact to (6S)-5-formyl-5,6,7,8-tetrahydrofolate.

Belongs to the TRAFAC class TrmE-Era-EngA-EngB-Septin-like GTPase superfamily. TrmE GTPase family. As to quaternary structure, homodimer. Heterotetramer of two MnmE and two MnmG subunits. It depends on K(+) as a cofactor.

It is found in the cytoplasm. Its function is as follows. Exhibits a very high intrinsic GTPase hydrolysis rate. Involved in the addition of a carboxymethylaminomethyl (cmnm) group at the wobble position (U34) of certain tRNAs, forming tRNA-cmnm(5)s(2)U34. This Pseudomonas savastanoi pv. phaseolicola (strain 1448A / Race 6) (Pseudomonas syringae pv. phaseolicola (strain 1448A / Race 6)) protein is tRNA modification GTPase MnmE.